Reading from the N-terminus, the 300-residue chain is Light-independent protochlorophyllide reductase iron-sulfur ATP-binding protein (300 aa).

Residues G43–T48 and K72 contribute to the ATP site. S47 is a Mg(2+) binding site. The [4Fe-4S] cluster site is built by C128 and C162. N213–R214 is an ATP binding site.

This sequence belongs to the NifH/BchL/ChlL family. As to quaternary structure, homodimer. Protochlorophyllide reductase is composed of three subunits; ChlL, ChlN and ChlB. [4Fe-4S] cluster is required as a cofactor.

It catalyses the reaction chlorophyllide a + oxidized 2[4Fe-4S]-[ferredoxin] + 2 ADP + 2 phosphate = protochlorophyllide a + reduced 2[4Fe-4S]-[ferredoxin] + 2 ATP + 2 H2O. Its pathway is porphyrin-containing compound metabolism; chlorophyll biosynthesis (light-independent). Its function is as follows. Component of the dark-operative protochlorophyllide reductase (DPOR) that uses Mg-ATP and reduced ferredoxin to reduce ring D of protochlorophyllide (Pchlide) to form chlorophyllide a (Chlide). This reaction is light-independent. The L component serves as a unique electron donor to the NB-component of the complex, and binds Mg-ATP. This chain is Light-independent protochlorophyllide reductase iron-sulfur ATP-binding protein, found in Synechococcus sp. (strain RCC307).